The primary structure comprises 491 residues: GTPase Der (491 aa).

In terms of domain architecture, EngA-type G 1 spans 3-166 (PVIALVGRPN…AALGIFPRDD (164 aa)). Residues 9–16 (GRPNVGKS), 56–60 (DTGGI), and 118–121 (NKVD) each bind GTP. The interval 164-191 (RDDEGEEGEGEAEVVAEGEEPKRVPGPS) is disordered. Over residues 166–181 (DEGEEGEGEAEVVAEG) the composition is skewed to acidic residues. The span at 182-191 (EEPKRVPGPS) shows a compositional bias: basic and acidic residues. One can recognise an EngA-type G 2 domain in the interval 196-369 (IKIAIIGRPN…SVQAAFQSAV (174 aa)). GTP-binding positions include 202-209 (GRPNVGKS), 249-253 (DTAGV), and 314-317 (NKWD). The KH-like domain occupies 370–454 (TRWPTSRLTR…PIRIEYKGGD (85 aa)). The segment covering 452–464 (GGDNPYEGKKNSL) has biased composition (basic and acidic residues). A disordered region spans residues 452-491 (GGDNPYEGKKNSLTERQVNKKRRLMSHHKKAEKKRRDKKR). Residues 470–491 (NKKRRLMSHHKKAEKKRRDKKR) are compositionally biased toward basic residues.

This sequence belongs to the TRAFAC class TrmE-Era-EngA-EngB-Septin-like GTPase superfamily. EngA (Der) GTPase family. As to quaternary structure, associates with the 50S ribosomal subunit.

Functionally, GTPase that plays an essential role in the late steps of ribosome biogenesis. In Azotobacter vinelandii (strain DJ / ATCC BAA-1303), this protein is GTPase Der.